Here is a 1326-residue protein sequence, read N- to C-terminus: Probable serine/threonine-protein kinase gdt8 (1326 aa).

The N-terminal stretch at 1 to 22 (MINKILIKLITIIIFCFSFLFA) is a signal peptide. At 23 to 782 (EEDLIRTPPG…VDRNENLELK (760 aa)) the chain is on the extracellular side. Disordered stretches follow at residues 419–467 (VDQN…GNQG) and 731–762 (EPPT…QTPI). Composition is skewed to low complexity over residues 422-460 (NNNN…NNNN) and 731-761 (EPPT…TQTP). A helical membrane pass occupies residues 783 to 803 (IALPICLSLALLIGIIIMICI). The Cytoplasmic portion of the chain corresponds to 804–1326 (FKKVQSNSKL…TKEDKDLDEN (523 aa)). The tract at residues 833-858 (IVSQPPTVIEEKPQDNSKPDDQKLIE) is disordered. The segment covering 841–858 (IEEKPQDNSKPDDQKLIE) has biased composition (basic and acidic residues). The Protein kinase domain occupies 1036–1292 (IKTEQLIASY…FSEISLHLEI (257 aa)). ATP is bound by residues 1042–1050 (IASYLPSKV) and lysine 1065. Aspartate 1158 serves as the catalytic Proton acceptor. The disordered stretch occupies residues 1301 to 1326 (MNESEESTSNHNTNSKTKEDKDLDEN). The segment covering 1316-1326 (KTKEDKDLDEN) has biased composition (basic and acidic residues).

The protein in the N-terminal section; belongs to the GDT family. This sequence in the C-terminal section; belongs to the protein kinase superfamily. TKL Ser/Thr protein kinase family.

Its subcellular location is the membrane. The catalysed reaction is L-seryl-[protein] + ATP = O-phospho-L-seryl-[protein] + ADP + H(+). It catalyses the reaction L-threonyl-[protein] + ATP = O-phospho-L-threonyl-[protein] + ADP + H(+). The sequence is that of Probable serine/threonine-protein kinase gdt8 (gdt8) from Dictyostelium discoideum (Social amoeba).